The chain runs to 262 residues: Thiazole synthase (262 aa).

Lysine 97 acts as the Schiff-base intermediate with DXP in catalysis. 1-deoxy-D-xylulose 5-phosphate-binding positions include glycine 158, 185–186 (AG), and 207–208 (NT). Positions 243–262 (DKAQASTPTVGQPFWHSAEY) are disordered.

Belongs to the ThiG family. As to quaternary structure, homotetramer. Forms heterodimers with either ThiH or ThiS.

It localises to the cytoplasm. It catalyses the reaction [ThiS sulfur-carrier protein]-C-terminal-Gly-aminoethanethioate + 2-iminoacetate + 1-deoxy-D-xylulose 5-phosphate = [ThiS sulfur-carrier protein]-C-terminal Gly-Gly + 2-[(2R,5Z)-2-carboxy-4-methylthiazol-5(2H)-ylidene]ethyl phosphate + 2 H2O + H(+). It functions in the pathway cofactor biosynthesis; thiamine diphosphate biosynthesis. Its function is as follows. Catalyzes the rearrangement of 1-deoxy-D-xylulose 5-phosphate (DXP) to produce the thiazole phosphate moiety of thiamine. Sulfur is provided by the thiocarboxylate moiety of the carrier protein ThiS. In vitro, sulfur can be provided by H(2)S. The sequence is that of Thiazole synthase from Neisseria meningitidis serogroup C (strain 053442).